The primary structure comprises 576 residues: Alkaline phosphatase PhoD (576 aa).

The N-terminal stretch at 1–32 (MNSLLHHSFLKTVFSSLAIAIVTSSLSSVTIA) is a signal peptide. Residues Asp-68 and Thr-107 each contribute to the Zn(2+) site. The active-site Phosphothreonine intermediate is Thr-107. The cysteines at positions 108 and 144 are disulfide-linked. Substrate is bound by residues Asn-128 and 188-190 (KDR). Cys-248 and Cys-332 are joined by a disulfide. The Zn(2+) site is built by Asp-318, His-322, Asp-363, His-364, and His-508. Residues Cys-562 and Cys-573 are joined by a disulfide bond.

Monomer. Zn(2+) is required as a cofactor.

The enzyme catalyses a phosphate monoester + H2O = an alcohol + phosphate. Its function is as follows. Alkaline phosphatase with broad substrate specificity. Has phosphatase activity towards nucleotide and sugar phosphates with a preference to nucleotide phosphates. Has no phosphodiesterase activity. The polypeptide is Alkaline phosphatase PhoD (Zymomonas mobilis subsp. mobilis (strain ATCC 31821 / ZM4 / CP4)).